We begin with the raw amino-acid sequence, 174 residues long: Ribosome maturation factor RimM (174 aa).

In terms of domain architecture, PRC barrel spans Ala98–Leu172.

This sequence belongs to the RimM family. As to quaternary structure, binds ribosomal protein uS19.

The protein resides in the cytoplasm. In terms of biological role, an accessory protein needed during the final step in the assembly of 30S ribosomal subunit, possibly for assembly of the head region. Essential for efficient processing of 16S rRNA. May be needed both before and after RbfA during the maturation of 16S rRNA. It has affinity for free ribosomal 30S subunits but not for 70S ribosomes. The chain is Ribosome maturation factor RimM from Lactiplantibacillus plantarum (strain ATCC BAA-793 / NCIMB 8826 / WCFS1) (Lactobacillus plantarum).